The following is a 366-amino-acid chain: Ribosomal RNA large subunit methyltransferase M (366 aa).

Residues Ser188, Cys221–Gly224, Asp240, Asp260, and Asp277 contribute to the S-adenosyl-L-methionine site. Lys306 acts as the Proton acceptor in catalysis.

The protein belongs to the class I-like SAM-binding methyltransferase superfamily. RNA methyltransferase RlmE family. RlmM subfamily. In terms of assembly, monomer.

Its subcellular location is the cytoplasm. It carries out the reaction cytidine(2498) in 23S rRNA + S-adenosyl-L-methionine = 2'-O-methylcytidine(2498) in 23S rRNA + S-adenosyl-L-homocysteine + H(+). Functionally, catalyzes the 2'-O-methylation at nucleotide C2498 in 23S rRNA. This is Ribosomal RNA large subunit methyltransferase M from Pectobacterium carotovorum subsp. carotovorum (strain PC1).